The chain runs to 147 residues: Large ribosomal subunit protein bL9 (147 aa).

It belongs to the bacterial ribosomal protein bL9 family.

Functionally, binds to the 23S rRNA. The protein is Large ribosomal subunit protein bL9 of Halalkalibacterium halodurans (strain ATCC BAA-125 / DSM 18197 / FERM 7344 / JCM 9153 / C-125) (Bacillus halodurans).